Reading from the N-terminus, the 1409-residue chain is DNA-directed RNA polymerase subunit beta' (1409 aa).

Zn(2+)-binding residues include C70, C72, C85, and C88. Mg(2+)-binding residues include D461, D463, and D465. 4 residues coordinate Zn(2+): C820, C894, C901, and C904.

It belongs to the RNA polymerase beta' chain family. As to quaternary structure, the RNAP catalytic core consists of 2 alpha, 1 beta, 1 beta' and 1 omega subunit. When a sigma factor is associated with the core the holoenzyme is formed, which can initiate transcription. Mg(2+) serves as cofactor. It depends on Zn(2+) as a cofactor.

It catalyses the reaction RNA(n) + a ribonucleoside 5'-triphosphate = RNA(n+1) + diphosphate. Functionally, DNA-dependent RNA polymerase catalyzes the transcription of DNA into RNA using the four ribonucleoside triphosphates as substrates. The protein is DNA-directed RNA polymerase subunit beta' of Ralstonia nicotianae (strain ATCC BAA-1114 / GMI1000) (Ralstonia solanacearum).